A 191-amino-acid chain; its full sequence is 3-isopropylmalate dehydratase small subunit (191 aa).

Belongs to the LeuD family. LeuD type 1 subfamily. As to quaternary structure, heterodimer of LeuC and LeuD.

The catalysed reaction is (2R,3S)-3-isopropylmalate = (2S)-2-isopropylmalate. It functions in the pathway amino-acid biosynthesis; L-leucine biosynthesis; L-leucine from 3-methyl-2-oxobutanoate: step 2/4. Functionally, catalyzes the isomerization between 2-isopropylmalate and 3-isopropylmalate, via the formation of 2-isopropylmaleate. This is 3-isopropylmalate dehydratase small subunit from Staphylococcus saprophyticus subsp. saprophyticus (strain ATCC 15305 / DSM 20229 / NCIMB 8711 / NCTC 7292 / S-41).